The sequence spans 113 residues: uncharacterized protein (113 aa).

2 disordered regions span residues 1 to 22 (MGEH…PLAQ) and 90 to 113 (DGRH…SDDL). Residues 90-99 (DGRHTTESSF) are compositionally biased toward basic and acidic residues. A compositionally biased stretch (low complexity) spans 100–113 (EHSSPSRSPQSDDL).

This is an uncharacterized protein from Mycobacterium tuberculosis (strain CDC 1551 / Oshkosh).